Reading from the N-terminus, the 217-residue chain is NAD(P)H-quinone oxidoreductase subunit M, chloroplastic (217 aa).

The N-terminal 21 residues, 1–21 (MVAAFSYTACTKLSLLHPSMV), are a transit peptide targeting the chloroplast. A disordered region spans residues 48–67 (ETETLKEEQSTEKMKKQPTP). The segment covering 50–62 (ETLKEEQSTEKMK) has biased composition (basic and acidic residues).

Belongs to the NDH complex subunit M family. Part of the chloroplast NDH complex, composed of a mixture of chloroplast and nucleus encoded subunits. Component of the NDH subcomplex A, at least composed of ndhH, ndhI, ndhJ, ndhK, ndhL, ndhM, ndhN and ndhO.

The protein localises to the plastid. It localises to the chloroplast thylakoid membrane. The catalysed reaction is a plastoquinone + NADH + (n+1) H(+)(in) = a plastoquinol + NAD(+) + n H(+)(out). It catalyses the reaction a plastoquinone + NADPH + (n+1) H(+)(in) = a plastoquinol + NADP(+) + n H(+)(out). NDH shuttles electrons from NAD(P)H:plastoquinone, via FMN and iron-sulfur (Fe-S) centers, to quinones in the photosynthetic chain and possibly in a chloroplast respiratory chain. The immediate electron acceptor for the enzyme in this species is believed to be plastoquinone. Couples the redox reaction to proton translocation, and thus conserves the redox energy in a proton gradient. This chain is NAD(P)H-quinone oxidoreductase subunit M, chloroplastic, found in Arabidopsis thaliana (Mouse-ear cress).